The primary structure comprises 455 residues: Probable galactarate/D-glucarate transporter GudP (455 aa).

The next 12 helical transmembrane spans lie at Trp19 to Leu39, Tyr59 to Leu79, Ile87 to Phe107, Phe108 to Glu128, Ala153 to Leu173, Phe177 to Trp197, Ile253 to Phe273, Gly289 to Val309, Leu320 to Val340, Trp348 to Trp368, Leu386 to Val406, and Gly414 to Val434.

The protein belongs to the major facilitator superfamily. Phthalate permease family.

The protein resides in the cell membrane. It catalyses the reaction galactarate(in) + H(+)(in) = galactarate(out) + H(+)(out). It carries out the reaction D-glucarate(in) + H(+)(in) = D-glucarate(out) + H(+)(out). In terms of biological role, probably involved in the uptake of galactarate and/or D-glucarate. This Bacillus subtilis (strain 168) protein is Probable galactarate/D-glucarate transporter GudP.